Here is a 203-residue protein sequence, read N- to C-terminus: Holliday junction branch migration complex subunit RuvA (203 aa).

A domain I region spans residues 1–64 (MIGRLRGIIL…EDAQLLYGFN (64 aa)). The segment at 65-142 (NKQERTLFKE…KGLHGDLFTP (78 aa)) is domain II. The segment at 143–154 (AADLVLTSPASP) is flexible linker. The segment at 155 to 203 (ATDDAEQEAVAALVALGYKPQEASRMVSKIARPDASSETLIREALRAAL) is domain III.

It belongs to the RuvA family. As to quaternary structure, homotetramer. Forms an RuvA(8)-RuvB(12)-Holliday junction (HJ) complex. HJ DNA is sandwiched between 2 RuvA tetramers; dsDNA enters through RuvA and exits via RuvB. An RuvB hexamer assembles on each DNA strand where it exits the tetramer. Each RuvB hexamer is contacted by two RuvA subunits (via domain III) on 2 adjacent RuvB subunits; this complex drives branch migration. In the full resolvosome a probable DNA-RuvA(4)-RuvB(12)-RuvC(2) complex forms which resolves the HJ.

Its subcellular location is the cytoplasm. Its function is as follows. The RuvA-RuvB-RuvC complex processes Holliday junction (HJ) DNA during genetic recombination and DNA repair, while the RuvA-RuvB complex plays an important role in the rescue of blocked DNA replication forks via replication fork reversal (RFR). RuvA specifically binds to HJ cruciform DNA, conferring on it an open structure. The RuvB hexamer acts as an ATP-dependent pump, pulling dsDNA into and through the RuvAB complex. HJ branch migration allows RuvC to scan DNA until it finds its consensus sequence, where it cleaves and resolves the cruciform DNA. The sequence is that of Holliday junction branch migration complex subunit RuvA from Citrobacter koseri (strain ATCC BAA-895 / CDC 4225-83 / SGSC4696).